A 442-amino-acid chain; its full sequence is Tubby-related protein 3 (442 aa).

The tract at residues 23-68 (MRQAKLDYQRLLLEKRQRKKRLEPFMVQPNPEARLRRAKPRASDEQ) is required for association with the IFT complex A (IFT-A). The tract at residues 101–177 (PSVSSSVVEE…TSGSATAAQP (77 aa)) is disordered. The segment covering 145-162 (GISQSACLERPNSASSQN) has biased composition (polar residues). Positions 163 to 175 (STDTGTSGSATAA) are enriched in low complexity.

This sequence belongs to the TUB family. Associates with the IFT complex A (IFT-A). Interacts with SIRT1. Expressed at high levels in testis, ovaries, thyroid, and spinal cord.

Its subcellular location is the nucleus. It localises to the cell membrane. It is found in the cell projection. The protein localises to the cilium. The protein resides in the cytoplasm. Its subcellular location is the secreted. Functionally, negative regulator of the Shh signaling transduction pathway: recruited to primary cilia via association with the IFT complex A (IFT-A) and is required for recruitment of G protein-coupled receptor GPR161 to cilia, a promoter of PKA-dependent basal repression machinery in Shh signaling. Binds to phosphorylated inositide (phosphoinositide) lipids. Both IFT-A- and phosphoinositide-binding properties are required to regulate ciliary G protein-coupled receptor trafficking. During adipogenesis, regulates ciliary trafficking of FFAR4 in preadipocytes. This is Tubby-related protein 3 from Homo sapiens (Human).